Here is a 301-residue protein sequence, read N- to C-terminus: Asialoglycoprotein receptor 2 (301 aa).

Residues 1–43 (MEKDCQDIQQLDSEENDHQLSGDDEHGSHVQDPRIENPHWKGQ) are disordered. Residues 1 to 58 (MEKDCQDIQQLDSEENDHQLSGDDEHGSHVQDPRIENPHWKGQPLSRPFPQRLCSTFR) are Cytoplasmic-facing. A Phosphoserine modification is found at serine 13. Residues 16-39 (NDHQLSGDDEHGSHVQDPRIENPH) are compositionally biased toward basic and acidic residues. Cysteine 54 is lipidated: S-palmitoyl cysteine. Residues 59–79 (LSLLALAFNILLLVVICVVSS) traverse the membrane as a helical; Signal-anchor for type II membrane protein segment. Topologically, residues 80–301 (QSIQLQEEFR…VCEKRRNITH (222 aa)) are extracellular. Residues asparagine 97 and asparagine 165 are each glycosylated (N-linked (GlcNAc...) asparagine). The 127-residue stretch at 169-295 (CCPVNWVEFG…QQVNRWVCEK (127 aa)) folds into the C-type lectin domain. 3 cysteine pairs are disulfide-bonded: cysteine 170–cysteine 181, cysteine 198–cysteine 293, and cysteine 271–cysteine 285. The N-linked (GlcNAc...) asparagine glycan is linked to asparagine 298.

Interacts with LASS2. As to expression, expressed exclusively in hepatic parenchymal cells.

It is found in the membrane. In terms of biological role, mediates the endocytosis of plasma glycoproteins to which the terminal sialic acid residue on their complex carbohydrate moieties has been removed. The receptor recognizes terminal galactose and N-acetylgalactosamine units. After ligand binding to the receptor, the resulting complex is internalized and transported to a sorting organelle, where receptor and ligand are disassociated. The receptor then returns to the cell membrane surface. The polypeptide is Asialoglycoprotein receptor 2 (Asgr2) (Mus musculus (Mouse)).